The chain runs to 542 residues: Glutamyl-tRNA(Gln) amidotransferase subunit A, mitochondrial (542 aa).

Active-site charge relay system residues include Lys55 and Ser143. Ser167 acts as the Acyl-ester intermediate in catalysis.

Belongs to the amidase family. GatA subfamily. In terms of assembly, subunit of the heterotrimeric GatCAB amidotransferase (AdT) complex, composed of A, B and C subunits.

It is found in the mitochondrion. It carries out the reaction L-glutamyl-tRNA(Gln) + L-glutamine + ATP + H2O = L-glutaminyl-tRNA(Gln) + L-glutamate + ADP + phosphate + H(+). Allows the formation of correctly charged Gln-tRNA(Gln) through the transamidation of misacylated Glu-tRNA(Gln) in the mitochondria. The reaction takes place in the presence of glutamine and ATP through an activated gamma-phospho-Glu-tRNA(Gln). The chain is Glutamyl-tRNA(Gln) amidotransferase subunit A, mitochondrial from Neurospora crassa (strain ATCC 24698 / 74-OR23-1A / CBS 708.71 / DSM 1257 / FGSC 987).